Consider the following 226-residue polypeptide: Probable transcriptional regulator RABBIT EARS (226 aa).

The C2H2-type zinc-finger motif lies at 55 to 77 (YSCSFCGREFKSAQALGGHMNVH). Residues 80-102 (DRARLKQQSLSPSSTDQATPPEC) form a disordered region. The segment covering 85–97 (KQQSLSPSSTDQA) has biased composition (polar residues). Positions 212-216 (LDLEL) match the EAR-like (transcriptional repression) motif.

In terms of tissue distribution, strongly expressed in inflorescences and flowers, and weakly in siliques, seedlings and roots. In flowers, it is expressed in petal primordia and their precursor cells. Also expressed in the lateral root caps and the basal cells of lateral roots.

It is found in the nucleus. Functionally, probable transcriptional regulator essential for petal development. Required for the early development of the organ primordia of the second whorl. Acts downstream of AP1 and PTL. The chain is Probable transcriptional regulator RABBIT EARS (RBE) from Arabidopsis thaliana (Mouse-ear cress).